Consider the following 942-residue polypeptide: Inter-alpha-trypsin inhibitor heavy chain H5 (942 aa).

An N-terminal signal peptide occupies residues 1-16 (MLLLLGLCLGLSLCVG). In terms of domain architecture, VIT spans 35 to 161 (VPRQVRLLQR…KAAFFLSYEE (127 aa)). N-linked (GlcNAc...) asparagine glycosylation is found at N97 and N127. 2 disordered regions span residues 116-136 (KKSGDRVKEKRNKTTEENGEK) and 208-227 (SRQRGSGRGEDDSGPPPSTV). N-linked (GlcNAc...) asparagine glycans are attached at residues N231, N421, and N508. Residues 295–478 (NVVFVLDSSA…SQLIGFYDEI (184 aa)) form the VWFA domain. Positions 550–571 (QKAGKDVTGSPRPGGDGEGDTN) are disordered. N776, N795, and N862 each carry an N-linked (GlcNAc...) asparagine glycan.

The protein belongs to the ITIH family. As to expression, abundantly expressed in placenta. Less abundant expression in mammary gland and ovary. Expression is barely detectable levels in all other tissues tested.

Its subcellular location is the secreted. In terms of biological role, may act as a tumor suppressor. The sequence is that of Inter-alpha-trypsin inhibitor heavy chain H5 (ITIH5) from Homo sapiens (Human).